A 767-amino-acid chain; its full sequence is Cilia- and flagella-associated protein 91 (767 aa).

A disordered region spans residues 1–29 (MSHAVTIQEPQAQPQVSQTRYRERSRAGS). Over residues 8–19 (QEPQAQPQVSQT) the composition is skewed to polar residues.

Belongs to the CFAP91 family. As to quaternary structure, part of a complex containing MYCBP, AKAP1 and PRKAR2B. Interacts with MYCBP and AKAP1. Interacts with CFAP61. In terms of processing, phosphorylated by PKA.

It localises to the cytoplasm. Its subcellular location is the mitochondrion. The protein localises to the cytoskeleton. It is found in the cilium axoneme. In terms of biological role, involved in sperm flagellum axonemal organization and function. May regulate cilium motility through its role in the assembly of the axonemal radial spokes. This is Cilia- and flagella-associated protein 91 (CFAP91) from Macaca fascicularis (Crab-eating macaque).